The chain runs to 255 residues: 4-diphosphocytidyl-2-C-methyl-D-erythritol kinase (255 aa).

Lys6 is an active-site residue. 95 to 105 (PVCAGLGGGSS) contacts ATP. Asp137 is a catalytic residue.

It belongs to the GHMP kinase family. IspE subfamily.

It catalyses the reaction 4-CDP-2-C-methyl-D-erythritol + ATP = 4-CDP-2-C-methyl-D-erythritol 2-phosphate + ADP + H(+). It participates in isoprenoid biosynthesis; isopentenyl diphosphate biosynthesis via DXP pathway; isopentenyl diphosphate from 1-deoxy-D-xylulose 5-phosphate: step 3/6. Its function is as follows. Catalyzes the phosphorylation of the position 2 hydroxy group of 4-diphosphocytidyl-2C-methyl-D-erythritol. The chain is 4-diphosphocytidyl-2-C-methyl-D-erythritol kinase from Campylobacter jejuni subsp. doylei (strain ATCC BAA-1458 / RM4099 / 269.97).